Here is a 460-residue protein sequence, read N- to C-terminus: Serine hydroxymethyltransferase, cytosolic (460 aa).

Lys244 is modified (N6-(pyridoxal phosphate)lysine).

It belongs to the SHMT family. As to quaternary structure, homotetramer. It depends on pyridoxal 5'-phosphate as a cofactor.

It is found in the cytoplasm. It carries out the reaction (6R)-5,10-methylene-5,6,7,8-tetrahydrofolate + glycine + H2O = (6S)-5,6,7,8-tetrahydrofolate + L-serine. It participates in one-carbon metabolism; tetrahydrofolate interconversion. In terms of biological role, interconversion of serine and glycine. In Encephalitozoon cuniculi (strain GB-M1) (Microsporidian parasite), this protein is Serine hydroxymethyltransferase, cytosolic (SHMT-1).